Reading from the N-terminus, the 118-residue chain is Large ribosomal subunit protein bL20 (118 aa).

It belongs to the bacterial ribosomal protein bL20 family.

Functionally, binds directly to 23S ribosomal RNA and is necessary for the in vitro assembly process of the 50S ribosomal subunit. It is not involved in the protein synthesizing functions of that subunit. In Erwinia tasmaniensis (strain DSM 17950 / CFBP 7177 / CIP 109463 / NCPPB 4357 / Et1/99), this protein is Large ribosomal subunit protein bL20.